We begin with the raw amino-acid sequence, 339 residues long: HTH-type transcriptional regulator PtxS (339 aa).

Positions 12-67 (VTISEVARVAGVSKATVSRYIGGDRQLLAEATAKRLEEVIERLGYRPNQMARGLKR) constitute an HTH lacI-type domain. The H-T-H motif DNA-binding region spans 14–33 (ISEVARVAGVSKATVSRYIG).

As to quaternary structure, homodimer in solution.

2-ketogluconate acts as a molecular effector and causes dissociation of PtxS from its target promoter. In terms of biological role, negatively regulates glucose metabolism by binding directly to the promoter region of the kgu and gad operons. It also negatively regulates its own synthesis. In Pseudomonas putida (strain ATCC 47054 / DSM 6125 / CFBP 8728 / NCIMB 11950 / KT2440), this protein is HTH-type transcriptional regulator PtxS.